Consider the following 105-residue polypeptide: MKNKIKIRLKSFDHRSLDQATKEIVSAVKRTFANINGPIPLPRKIGRFTVNRSPHVHKKSREQFEIRKHKRLLVIGDPNPAVVDALSKVDLAAGVDVVIELESGE.

It belongs to the universal ribosomal protein uS10 family. In terms of assembly, part of the 30S ribosomal subunit.

In terms of biological role, involved in the binding of tRNA to the ribosomes. In Rickettsia massiliae (strain Mtu5), this protein is Small ribosomal subunit protein uS10.